The following is a 738-amino-acid chain: Ethylene receptor (738 aa).

Helical transmembrane passes span 23–43 (ISDF…IYFV), 54–74 (VLVQ…INLW), and 92–112 (VLTA…IPDL). Cu cation-binding residues include Cys-65 and His-69. In terms of domain architecture, GAF spans 158–307 (DRHTILKTTL…VVADQVAVAL (150 aa)). A Histidine kinase domain is found at 350-589 (VMNHEMRTPM…IFIVKLGFAE (240 aa)). Residue His-353 is modified to Phosphohistidine; by autocatalysis. Positions 612–729 (PGLKVLVMDD…KMRSVLSELL (118 aa)) constitute a Response regulatory domain. Position 660 is a 4-aspartylphosphate (Asp-660).

It belongs to the ethylene receptor family. In terms of assembly, homodimer; disulfide-linked. Cu cation is required as a cofactor. Post-translationally, activation probably requires a transfer of a phosphate group between a His in the transmitter domain and an Asp of the receiver domain.

It localises to the endoplasmic reticulum membrane. It carries out the reaction ATP + protein L-histidine = ADP + protein N-phospho-L-histidine.. Its function is as follows. May act early in the ethylene signal transduction pathway, possibly as an ethylene receptor, or as a regulator of the pathway. The polypeptide is Ethylene receptor (ETR1) (Prunus persica (Peach)).